We begin with the raw amino-acid sequence, 287 residues long: MLLKGAPVAERVLNKIKQEISNSSTRPGLAVVLIGNDPASEVYVGMKVKKATDLGMVSKAHRLSSDATLTDILKLIDRLNNDPMIHGILVQIPLPKHLDANAVIQAISPEKDVDGLHPINMGKLLLGQLGGFAPCTPAGIIELLHYYEIPLHGRHVAVVGRSNIVGKPLAAMLMQKHPSTNATVTLLHSQSENLTEILKTADIIIAAVGVPLFIKETMISSHAIVVDVGTSRVAANNDKGYTLVGDVDFNNVVAKCKAVSPVPGGVGPMTVAMLMKNTWESYKKSSS.

NADP(+) contacts are provided by residues Gly-160–Ser-162, Ser-189, and Thr-230.

Belongs to the tetrahydrofolate dehydrogenase/cyclohydrolase family. As to quaternary structure, homodimer.

The enzyme catalyses (6R)-5,10-methylene-5,6,7,8-tetrahydrofolate + NADP(+) = (6R)-5,10-methenyltetrahydrofolate + NADPH. The catalysed reaction is (6R)-5,10-methenyltetrahydrofolate + H2O = (6R)-10-formyltetrahydrofolate + H(+). It participates in one-carbon metabolism; tetrahydrofolate interconversion. In terms of biological role, catalyzes the oxidation of 5,10-methylenetetrahydrofolate to 5,10-methenyltetrahydrofolate and then the hydrolysis of 5,10-methenyltetrahydrofolate to 10-formyltetrahydrofolate. This chain is Bifunctional protein FolD, found in Chlamydia caviae (strain ATCC VR-813 / DSM 19441 / 03DC25 / GPIC) (Chlamydophila caviae).